The sequence spans 353 residues: MDLEASLLPTGPNASNTSDGPDNLTSAGPPPRTGSISYVNIIMPSVFGTICLLGIIGNSMVIFAVVKKSKLHWFSNVPDIFIINLSVVDLLFLLGMPFMIHQLMGNGVWHFGETMCTLITAMDANSQFTSTYILTAMAIDRYLATVHPISSTRFRKPSVATLVICLLWALSIISITPVWLYARLIPFPGGTVGCGIRLPNPDTDLYWFTLYQFFLAFALPFVVITAAYVRILQRMTSSVAPASQRSIRLRTKRVTRTAIAICLVFFVCWAPYYVLQLTQLSISRPTLTFVYLYNAAISLGYANSCLNPFVYIVLCETFRKRLVLSVKPAAQGQLRAVSNAQTAEEERTESKGT.

The tract at residues 1-28 (MDLEASLLPTGPNASNTSDGPDNLTSAG) is disordered. The Extracellular segment spans residues 1–45 (MDLEASLLPTGPNASNTSDGPDNLTSAGPPPRTGSISYVNIIMPS). Residues 12-26 (PNASNTSDGPDNLTS) show a composition bias toward polar residues. N-linked (GlcNAc...) asparagine glycans are attached at residues asparagine 13, asparagine 16, and asparagine 23. A helical membrane pass occupies residues 46–66 (VFGTICLLGIIGNSMVIFAVV). Over 67–79 (KKSKLHWFSNVPD) the chain is Cytoplasmic. The helical transmembrane segment at 80-100 (IFIINLSVVDLLFLLGMPFMI) threads the bilayer. Residues 101-116 (HQLMGNGVWHFGETMC) are Extracellular-facing. Cysteine 116 and cysteine 194 are oxidised to a cystine. The helical transmembrane segment at 117–139 (TLITAMDANSQFTSTYILTAMAI) threads the bilayer. The Cytoplasmic portion of the chain corresponds to 140–161 (DRYLATVHPISSTRFRKPSVAT). Residues 162 to 182 (LVICLLWALSIISITPVWLYA) form a helical membrane-spanning segment. Topologically, residues 183 to 204 (RLIPFPGGTVGCGIRLPNPDTD) are extracellular. Residues 205–225 (LYWFTLYQFFLAFALPFVVIT) traverse the membrane as a helical segment. Over 226–256 (AAYVRILQRMTSSVAPASQRSIRLRTKRVTR) the chain is Cytoplasmic. A helical membrane pass occupies residues 257 to 277 (TAIAICLVFFVCWAPYYVLQL). Residues 278-294 (TQLSISRPTLTFVYLYN) lie on the Extracellular side of the membrane. Residues 295-315 (AAISLGYANSCLNPFVYIVLC) traverse the membrane as a helical segment. Over 316–353 (ETFRKRLVLSVKPAAQGQLRAVSNAQTAEEERTESKGT) the chain is Cytoplasmic.

It belongs to the G-protein coupled receptor 1 family. As to quaternary structure, interacts with NCDN.

Its subcellular location is the cell membrane. Receptor for melanin-concentrating hormone, coupled to both G proteins that inhibit adenylyl cyclase and G proteins that activate phosphoinositide hydrolysis. In Sus scrofa (Pig), this protein is Melanin-concentrating hormone receptor 1.